A 514-amino-acid chain; its full sequence is Voltage-gated potassium channel regulatory subunit KCNG1 (514 aa).

The Cytoplasmic segment spans residues 1-224 (MTLLPGDNSH…DMVERPHSGL (224 aa)). A compositionally biased stretch (acidic residues) spans 180–196 (MEREEEEEPLDSEDQES). Residues 180–205 (MEREEEEEPLDSEDQESEGPSASEGR) form a disordered region. Residues 225–246 (PGKVFACLSVLFVTVTAVNLSV) form a helical membrane-spanning segment. The Extracellular portion of the chain corresponds to 247–267 (STLPSLREEEEQGQCSQMCHN). A helical membrane pass occupies residues 268-289 (VFIVESVCVGWFSLEFLLRFIQ). Residues 290–300 (APSKFAFLRSP) are Cytoplasmic-facing. Residues 301 to 321 (LTLIDLVAILPYYVTLLVDGA) form a helical membrane-spanning segment. The Extracellular segment spans residues 322–338 (ASSRRKPSTGNSYLDKV). Residues 339 to 359 (GLVLRVLRALRILYVMRLARH) form a helical; Voltage-sensor membrane-spanning segment. The Cytoplasmic segment spans residues 360 to 374 (SLGLQTLGLTARRCT). Residues 375–396 (REFGLLLLFLCVAIALFAPLLY) form a helical membrane-spanning segment. At 397–411 (VIENEMADSPEFTSI) the chain is on the extracellular side. The segment at residues 412-423 (PACYWWAVITMT) is an intramembrane region (helical). Positions 424-429 (TVGYGD) match the Selectivity filter motif. An intramembrane segment occupies 424–431 (TVGYGDMV). Over 432-438 (PRSTPGQ) the chain is Extracellular. A helical membrane pass occupies residues 439 to 467 (VVALSSILSGILLMAFPVTSIFHTFSRSY). The Cytoplasmic segment spans residues 468–514 (LELKQEQERVLIRRAQYLIKTKSQLSGMSQDSDILFGSASSDTRDNN).

This sequence belongs to the potassium channel family. G (TC 1.A.1.2) subfamily. Kv6.1/KCNG1 sub-subfamily. As to quaternary structure, heterotetramer with KCNB1 or KCNB2.

Its subcellular location is the cell membrane. In terms of biological role, regulatory alpha-subunit of the voltage-gated potassium (Kv) channel which, when coassembled with KCNB1 or KCNB2, can modulate their expression and their gating kinetics by acting on deactivation upon repolarization and inactivation during maintained depolarization. Potassium channel subunit that does not form functional channels by itself. In Mus musculus (Mouse), this protein is Voltage-gated potassium channel regulatory subunit KCNG1.